A 353-amino-acid chain; its full sequence is Protein RecA (353 aa).

Glycine 67–threonine 74 provides a ligand contact to ATP.

It belongs to the RecA family.

The protein localises to the cytoplasm. Its function is as follows. Can catalyze the hydrolysis of ATP in the presence of single-stranded DNA, the ATP-dependent uptake of single-stranded DNA by duplex DNA, and the ATP-dependent hybridization of homologous single-stranded DNAs. It interacts with LexA causing its activation and leading to its autocatalytic cleavage. This Salmonella agona (strain SL483) protein is Protein RecA.